The sequence spans 329 residues: Deoxynucleotidyltransferase terminal-interacting protein 1 (329 aa).

Disordered stretches follow at residues 1-22 and 147-178; these read MGATGDAEQPRGPSGAERGGLE and KRGRQAEEECAHRGSPLPKKRKGRPPGHILSS. Positions 56-147 are important for dimerization; it reads MTTSFTDPAI…RLTHELPGIK (92 aa). Over residues 147–158 the composition is skewed to basic and acidic residues; sequence KRGRQAEEECAH. Positions 159–173 form a DNA-binding region, a.T hook; the sequence is RGSPLPKKRKGRPPG. A Phosphoserine modification is found at serine 161. Residues 164–170 carry the Nuclear localization signal motif; sequence PKKRKGR. An important for DNA and nucleosome binding region spans residues 197–316; the sequence is REGPKWDPAR…MRKYMETLRT (120 aa). Positions 216–237 form a DNA-binding region, H-T-H motif; sequence GSRANKALGMGGTRGRIYIKHP.

Monomer and homodimer. A minor proportion may form homotrimers. Interacts with ZNF541. Interacts with the terminal deoxynucleotidyltransferase DNTT. Interacts with TRERF1. Identified in a histone deacetylase complex that contains DNTTIP1, HDAC1 and MIDEAS; this complex assembles into a tetramer that contains four copies of each protein chain. Component of a histone deacetylase complex containing DNTTIP1, ZNF541, HDAC1 and HDAC2. Identified in a complex with KCTD19, HDAC1, HDAC2 and ZNF541.

Its subcellular location is the nucleus. In terms of biological role, increases DNTT terminal deoxynucleotidyltransferase activity (in vitro). Also acts as a transcriptional regulator, binding to the consensus sequence 5'-GNTGCATG-3' following an AT-tract. Associates with RAB20 promoter and positively regulates its transcription. Binds DNA and nucleosomes; may recruit HDAC1 complexes to nucleosomes or naked DNA. This chain is Deoxynucleotidyltransferase terminal-interacting protein 1 (DNTTIP1), found in Pongo abelii (Sumatran orangutan).